Reading from the N-terminus, the 264-residue chain is 3-methyl-2-oxobutanoate hydroxymethyltransferase (264 aa).

Mg(2+)-binding residues include Asp-45 and Asp-84. Residues 45-46 (DS), Asp-84, and Lys-112 each bind 3-methyl-2-oxobutanoate. Glu-114 is a binding site for Mg(2+). Glu-181 functions as the Proton acceptor in the catalytic mechanism.

The protein belongs to the PanB family. As to quaternary structure, homodecamer; pentamer of dimers. The cofactor is Mg(2+).

The protein resides in the cytoplasm. It carries out the reaction 3-methyl-2-oxobutanoate + (6R)-5,10-methylene-5,6,7,8-tetrahydrofolate + H2O = 2-dehydropantoate + (6S)-5,6,7,8-tetrahydrofolate. It participates in cofactor biosynthesis; (R)-pantothenate biosynthesis; (R)-pantoate from 3-methyl-2-oxobutanoate: step 1/2. Its function is as follows. Catalyzes the reversible reaction in which hydroxymethyl group from 5,10-methylenetetrahydrofolate is transferred onto alpha-ketoisovalerate to form ketopantoate. This Edwardsiella ictaluri (strain 93-146) protein is 3-methyl-2-oxobutanoate hydroxymethyltransferase.